Consider the following 509-residue polypeptide: Histone deacetylase 2 (509 aa).

Positions 24-338 (RRVCYFYDPE…WCYETGVALG (315 aa)) are histone deacetylase. Residue histidine 158 is the Proton donor/acceptor of the active site. Zn(2+) is bound by residues aspartate 193, histidine 195, and aspartate 281. Positions 394-509 (PSVQFEERIP…NAKNEPGSSL (116 aa)) are disordered. Basic and acidic residues-rich tracts occupy residues 398–409 (FEERIPETKLPE), 418–434 (DERH…DHKP), and 448–472 (VKRE…HKVP). The span at 481–494 (SSKQVPTADANSMA) shows a compositional bias: polar residues.

This sequence belongs to the histone deacetylase family. HD Type 1 subfamily. It depends on Zn(2+) as a cofactor. Expressed in roots.

The protein localises to the nucleus. The enzyme catalyses N(6)-acetyl-L-lysyl-[histone] + H2O = L-lysyl-[histone] + acetate. In terms of biological role, responsible for the deacetylation of lysine residues on the N-terminal part of the core histones (H2A, H2B, H3 and H4). Histone deacetylation gives a tag for epigenetic repression and plays an important role in transcriptional regulation, cell cycle progression and developmental events. Histone deacetylases act via the formation of large multiprotein complexes. In Oryza sativa subsp. japonica (Rice), this protein is Histone deacetylase 2.